The following is a 205-amino-acid chain: HTH-type transcriptional regulator PksA (205 aa).

One can recognise an HTH tetR-type domain in the interval 8–68 (EKRRKQIAEA…FAMKLVQEKV (61 aa)). A DNA-binding region (H-T-H motif) is located at residues 31–50 (SARNIAKEAGLSLGALRHYF).

In terms of biological role, transcriptional regulation of the polyketide synthase operon. In Bacillus subtilis (strain 168), this protein is HTH-type transcriptional regulator PksA (pksA).